Here is a 565-residue protein sequence, read N- to C-terminus: Cytokinin dehydrogenase 2 (565 aa).

An N-terminal signal peptide occupies residues 1 to 20 (MKQEQVRMAVLLMLNCFVKA). An N-linked (GlcNAc...) asparagine glycan is attached at Asn-64. An FAD-binding PCMH-type domain is found at 74–255 (RLAAAAAVLY…TRARIPLAPA (182 aa)). FAD contacts are provided by Ala-108, Gly-110, and Gly-112. His-113 bears the Pros-8alpha-FAD histidine mark. FAD is bound by residues Ser-114, Gln-118, Asp-179, Thr-184, Ser-190, Ile-194, and Ile-245. Residue Asn-464 is glycosylated (N-linked (GlcNAc...) asparagine). 3 residues coordinate FAD: Tyr-517, Ser-554, and Gln-557.

This sequence belongs to the oxygen-dependent FAD-linked oxidoreductase family. As to quaternary structure, monomer. It depends on FAD as a cofactor. Post-translationally, glycosylated. In terms of tissue distribution, mostly expressed in leaves, culms, inflorescence meristems, and flowers, especially in vascular tissues.

It is found in the secreted. It localises to the extracellular space. The catalysed reaction is N(6)-dimethylallyladenine + A + H2O = 3-methyl-2-butenal + adenine + AH2. Functionally, catalyzes the oxidation of cytokinins, a family of N(6)-substituted adenine derivatives that are plant hormones, where the substituent is an isopentenyl group. Is a major QTL involved in grain yield. Modulates the number of reproductive organs by regulating the cytokinin accumulation in inflorescence meristems. Acts as negative regulator of panicle branching. In Oryza sativa subsp. japonica (Rice), this protein is Cytokinin dehydrogenase 2.